The primary structure comprises 224 residues: MDVSAALSSDYSSGTPSPVAADADDGSSAYMTVSSAPPKRRAGRTKFKETRHPVFKGVRRRNPGRWVCEVREPHGKQRIWLGTFETAEMAARAHDVAALALRGRAACLNFADSPRRLRVPPIGASHDDIRRAAAEAAEAFRPPPDESNAATEVAAAASGATNSNAEQFASHPYYEVMDDGLDLGMQGYLDMAQGMLIDPPPMAGDPAVGSGEDDNDGEVQLWSY.

A compositionally biased stretch (polar residues) spans 1–16 (MDVSAALSSDYSSGTP). The disordered stretch occupies residues 1-46 (MDVSAALSSDYSSGTPSPVAADADDGSSAYMTVSSAPPKRRAGRTK). Residues 54-111 (VFKGVRRRNPGRWVCEVREPHGKQRIWLGTFETAEMAARAHDVAALALRGRAACLNFA) constitute a DNA-binding region (AP2/ERF). 2 disordered regions span residues 139–161 (AFRPPPDESNAATEVAAAASGAT) and 200–224 (PPMAGDPAVGSGEDDNDGEVQLWSY).

It belongs to the AP2/ERF transcription factor family. ERF subfamily.

The protein localises to the nucleus. Functionally, transcriptional activator that binds specifically to the DNA sequence 5'-[AG]CCGAC-3'. Binding to the C-repeat/DRE element mediates high salinity- and dehydration-inducible transcription. The polypeptide is Dehydration-responsive element-binding protein 1G (DREB1G) (Oryza sativa subsp. japonica (Rice)).